The chain runs to 114 residues: MNSYLLLPMVSLLTCIGQLCQKQAAQCWEQPQARRLNLTLRWLAIAVVSLGLGMLLWLRLLQQLPLSVAYPMLSFNFVLVTLAAQLFYGEKATLRHWLGVAAIMFGILLMSWHL.

The next 3 membrane-spanning stretches (helical) occupy residues leucine 38–leucine 58, leucine 64–alanine 84, and leucine 94–leucine 114. Residues leucine 43–tryptophan 112 enclose the EamA domain.

The protein belongs to the ArnE family. Heterodimer of ArnE and ArnF.

The protein localises to the cell inner membrane. Its pathway is bacterial outer membrane biogenesis; lipopolysaccharide biosynthesis. In terms of biological role, translocates 4-amino-4-deoxy-L-arabinose-phosphoundecaprenol (alpha-L-Ara4N-phosphoundecaprenol) from the cytoplasmic to the periplasmic side of the inner membrane. This is Probable 4-amino-4-deoxy-L-arabinose-phosphoundecaprenol flippase subunit ArnE from Yersinia pseudotuberculosis serotype O:3 (strain YPIII).